A 354-amino-acid polypeptide reads, in one-letter code: Uroporphyrinogen decarboxylase (354 aa).

Substrate-binding positions include 27–31 (RQAGR), Asp77, Tyr154, Thr209, and His327.

It belongs to the uroporphyrinogen decarboxylase family. Homodimer.

The protein localises to the cytoplasm. It catalyses the reaction uroporphyrinogen III + 4 H(+) = coproporphyrinogen III + 4 CO2. Its pathway is porphyrin-containing compound metabolism; protoporphyrin-IX biosynthesis; coproporphyrinogen-III from 5-aminolevulinate: step 4/4. Functionally, catalyzes the decarboxylation of four acetate groups of uroporphyrinogen-III to yield coproporphyrinogen-III. In Serratia proteamaculans (strain 568), this protein is Uroporphyrinogen decarboxylase.